The sequence spans 390 residues: Probable splicing factor YJU2B (390 aa).

The disordered stretch occupies residues 354 to 390; it reads DACKASSSSEEENSIDSCATGKSLVADYSDSDSGSEV.

Belongs to the CWC16 family.

The protein resides in the nucleus. May be involved in mRNA splicing. This chain is Probable splicing factor YJU2B (yju2b), found in Danio rerio (Zebrafish).